The primary structure comprises 501 residues: Tegument protein US24 (501 aa).

It belongs to the herpesviridae US22 family.

The protein localises to the virion tegument. The chain is Tegument protein US24 (US24) from Human cytomegalovirus (strain AD169) (HHV-5).